The following is a 226-amino-acid chain: MIDSNFDIVLWVRMIKEGIEKKNLNPWDVNIAEIADYYIQKIKELKKFDIRLSADVILVAGILLRMKSEALYDECKVEEEEDYDYCDDYYDYDDIEEKPKKGKKKEKEDKDKNKKSKKPVTVDELIKTIEKELNKVKKSRKNREKKTNEVEEIIEELIEEDDISDIIAELLDDLMKEGIIVYQEKFKTREDRVRYFIPSLYLANDGKAELIQEKLFGELIIKLKSF.

The stretch at 121–163 (TVDELIKTIEKELNKVKKSRKNREKKTNEVEEIIEELIEEDDI) forms a coiled coil.

This is an uncharacterized protein from Methanocaldococcus jannaschii (strain ATCC 43067 / DSM 2661 / JAL-1 / JCM 10045 / NBRC 100440) (Methanococcus jannaschii).